We begin with the raw amino-acid sequence, 118 residues long: D-dopachrome decarboxylase (118 aa).

Proline 2 is modified (N-acetylproline). An N6-acetyllysine modification is found at lysine 33. Serine 90 is subject to Phosphoserine.

Belongs to the MIF family. As to quaternary structure, homotrimer.

Its subcellular location is the cytoplasm. It carries out the reaction D-dopachrome + H(+) = 5,6-dihydroxyindole + CO2. Its function is as follows. Tautomerization of D-dopachrome with decarboxylation to give 5,6-dihydroxyindole (DHI). The chain is D-dopachrome decarboxylase (Ddt) from Mus musculus (Mouse).